The chain runs to 337 residues: F420-dependent glucose-6-phosphate dehydrogenase (337 aa).

Coenzyme F420-(gamma-Glu)n is bound at residue aspartate 44. Catalysis depends on histidine 45, which acts as the Proton donor. Coenzyme F420-(gamma-Glu)n-binding positions include threonine 81 and 112-113; that span reads TG. Glutamate 114 acts as the Proton acceptor in catalysis. Coenzyme F420-(gamma-Glu)n contacts are provided by residues asparagine 117, 180 to 181, and 183 to 184; these read GG and GV. 4 residues coordinate substrate: threonine 198, lysine 201, lysine 262, and arginine 286.

It belongs to the F420-dependent glucose-6-phosphate dehydrogenase family. As to quaternary structure, homodimer.

The enzyme catalyses oxidized coenzyme F420-(gamma-L-Glu)(n) + D-glucose 6-phosphate + H(+) = 6-phospho-D-glucono-1,5-lactone + reduced coenzyme F420-(gamma-L-Glu)(n). In terms of biological role, catalyzes the coenzyme F420-dependent oxidation of glucose 6-phosphate (G6P) to 6-phosphogluconolactone. The chain is F420-dependent glucose-6-phosphate dehydrogenase from Kineococcus radiotolerans (strain ATCC BAA-149 / DSM 14245 / SRS30216).